Consider the following 49-residue polypeptide: DNA-directed RNA polymerase subunit Rpo12 (49 aa).

Residues Cys11, Cys27, and Cys30 each contribute to the Zn(2+) site.

The protein belongs to the archaeal Rpo12/eukaryotic RPC10 RNA polymerase subunit family. Part of the RNA polymerase complex. It depends on Zn(2+) as a cofactor.

The protein resides in the cytoplasm. The enzyme catalyses RNA(n) + a ribonucleoside 5'-triphosphate = RNA(n+1) + diphosphate. Its function is as follows. DNA-dependent RNA polymerase (RNAP) catalyzes the transcription of DNA into RNA using the four ribonucleoside triphosphates as substrates. The chain is DNA-directed RNA polymerase subunit Rpo12 from Thermococcus onnurineus (strain NA1).